Here is a 378-residue protein sequence, read N- to C-terminus: Plant intracellular Ras-group-related LRR protein 8 (378 aa).

The 77-residue stretch at 10 to 86 (PTITVQVKFG…VMLMASQGLH (77 aa)) folds into the Ubiquitin-like domain. The tract at residues 85–120 (LHQGDGPITKNSSVPAPSTRRASNVKEAQIQKSDTN) is disordered. Residues 93–106 (TKNSSVPAPSTRRA) are compositionally biased toward polar residues. LRR repeat units follow at residues 129–152 (WKAT…VWGC), 153–176 (GSSI…IAAL), 178–201 (SLQK…GLTC), 202–225 (VQTL…LGSI), 226–250 (THLR…LLKH), 252–271 (EILI…IGGC), 272–293 (ESLN…AFGN), 294–317 (LQHL…FFIK), and 319–344 (SQLI…GWEE).

It belongs to the SHOC2 family. As to expression, widely expressed except in panicles.

Functionally, leucine-rich repeat protein that likely mediates protein interactions, possibly in the context of signal transduction. This chain is Plant intracellular Ras-group-related LRR protein 8 (IRL8), found in Oryza sativa subsp. japonica (Rice).